Here is a 468-residue protein sequence, read N- to C-terminus: Peripherin (468 aa).

Over residues 1–16 (MSHHSSGLRSSISSTS) the composition is skewed to low complexity. The disordered stretch occupies residues 1-22 (MSHHSSGLRSSISSTSYRRTFG). The head stretch occupies residues 1-96 (MSHHSSGLRS…FLATRSNEKQ (96 aa)). The residue at position 17 (Tyr17) is a 3'-nitrotyrosine. 3 positions are modified to phosphoserine: Ser28, Ser50, and Ser59. Positions 94-404 (EKQELQELND…KLLEGEESRI (311 aa)) constitute an IF rod domain. Residues 97-129 (ELQELNDRFANFIEKVRFLEQQNAALRGELSQA) form a coil 1A region. Residues 130–140 (RGQEPARADQL) are linker 1. Residues 141–236 (CQQELRELRR…KLHEEELRDL (96 aa)) form a coil 1B region. The segment at 237–259 (QVSVESQQVQQVEVEATVKPELT) is linker 2. The interval 260-402 (AALRDIRAQY…YRKLLEGEES (143 aa)) is coil 2. 3'-nitrotyrosine is present on Tyr376. Residues 403–468 (RISVPVHSFA…ELDKSSIHSY (66 aa)) form a tail region. The tract at residues 445–468 (GEKVVTESQKEQHSELDKSSIHSY) is disordered. Tyr468 is subject to Phosphotyrosine.

It belongs to the intermediate filament family. In terms of assembly, forms homodimers (in vitro). Homopolymerizes into a filamentous network (in vitro). Forms heterodimers with NEFL, NEFM or NEFH (in vitro). Interacts with DST (via C-terminus). Interacts with RAB7A; the interaction is direct. Interacts with PRKCE (via phorbol-ester/DAG-type 2 domain). Post-translationally, phosphorylated; phosphorylation increases after nerve injury in regenerating neurons. As to expression, expressed in hypoglossal motor neurons (at protein level). Expressed in the small and large sensory neurons of the dorsal root ganglion (at protein level). Expressed in cutaneous and muscular sensory neurons.

It localises to the cytoplasm. The protein localises to the cytoskeleton. Its subcellular location is the cell projection. The protein resides in the axon. It is found in the perikaryon. Its function is as follows. Class-III neuronal intermediate filament protein. My form an independent structural network without the involvement of other neurofilaments or may cooperate with the neuronal intermediate filament proteins NEFL, NEFH, NEFM and INA to form a filamentous network. Assembly of the neuronal intermediate filaments may be regulated by RAB7A. Plays a role in the development of unmyelinated sensory neurons. May be involved in axon elongation and axon regeneration after injury. Inhibits neurite extension in type II spiral ganglion neurons in the cochlea. This is Peripherin (Prph) from Rattus norvegicus (Rat).